A 342-amino-acid polypeptide reads, in one-letter code: ATP synthase subunit a (342 aa).

Helical transmembrane passes span 11-31, 109-129, 170-190, 199-219, 238-258, 262-282, 287-307, and 308-328; these read GLIKVIALVVPFLLNVNAFAS, HVVTLWVVSAIVLIVFTIIGS, YLPYLLTVFMFVLLCNVLGLV, NINVTLTLATFTFVLTQIAAL, ALWIIMIPIEFIGLFTKPVAL, LFANMTAGHIVILSLIFISFI, IVAVAMSVPFSIFIYLLEIFV, and AFLQAYIFTMLSALFIGLASA.

This sequence belongs to the ATPase A chain family. F-type ATPases have 2 components, CF(1) - the catalytic core - and CF(0) - the membrane proton channel. CF(1) has five subunits: alpha(3), beta(3), gamma(1), delta(1), epsilon(1). CF(0) has four main subunits: a, b, b' and c.

Its subcellular location is the cell inner membrane. Functionally, key component of the proton channel; it plays a direct role in the translocation of protons across the membrane. In Chlorobium phaeobacteroides (strain DSM 266 / SMG 266 / 2430), this protein is ATP synthase subunit a.